The chain runs to 357 residues: Decapping nuclease RAI1 (357 aa).

E157 provides a ligand contact to a divalent metal cation. Substrate contacts are provided by C189 and E206. A divalent metal cation contacts are provided by D208, E226, and L227. Substrate is bound by residues K228 and Q252.

It belongs to the DXO/Dom3Z family. As to quaternary structure, interacts with rat1; the interaction is direct, stabilizes rat1 protein structure and stimulates its exoribonuclease activity. The interaction also stimulates rai1 pyrophosphohydrolase activity, probably by recruiting it to mRNA substrates. The cofactor is a divalent metal cation.

It is found in the nucleus. The catalysed reaction is a 5'-end NAD(+)-phospho-ribonucleoside in mRNA + H2O = a 5'-end phospho-ribonucleoside in mRNA + NAD(+) + H(+). It carries out the reaction a 5'-end (N(7)-methyl 5'-triphosphoguanosine)-ribonucleoside-ribonucleotide in mRNA + H2O = a (N(7)-methyl 5'-triphosphoguanosine)-nucleoside + a 5'-end phospho-ribonucleoside in mRNA + H(+). The enzyme catalyses a 5'-end triphospho-ribonucleoside in mRNA + H2O = a 5'-end phospho-ribonucleoside in mRNA + diphosphate + H(+). Decapping enzyme for NAD-capped RNAs: specifically hydrolyzes the nicotinamide adenine dinucleotide (NAD) cap from a subset of RNAs by removing the entire NAD moiety from the 5'-end of an NAD-capped RNA. The NAD-cap is present at the 5'-end of some RNAs and snoRNAs. In contrast to the canonical 5'-end N7 methylguanosine (m7G) cap, the NAD cap promotes mRNA decay. Also acts as a non-canonical decapping enzyme that removes the entire cap structure of m7G capped or incompletely capped RNAs. Has decapping activity toward incomplete 5'-end m7G cap mRNAs such as unmethylated 5'-end-capped RNA (cap0), while it has no activity toward 2'-O-ribose methylated m7G cap (cap1). Also possesses RNA 5'-pyrophosphohydrolase activity by hydrolyzing the 5'-end triphosphate to release pyrophosphates. Stimulates exoribonuclease activity of Rat1, allowing it to degrade RNAs with stable secondary structure more effectively. The sequence is that of Decapping nuclease RAI1 (rai1) from Emericella nidulans (strain FGSC A4 / ATCC 38163 / CBS 112.46 / NRRL 194 / M139) (Aspergillus nidulans).